The chain runs to 589 residues: MPSSSSAAVLVFLLLVSLLTPTFASDSDHKYQAEEQVTLWVNKVGPYNNPQETYNYYSLPFCRPSGNNVHKWGGLGEVLGGNELIDSEIAIKFMKNVERSVICPLELDEAKVKHFKDAIESSYWFEFFMDDLPLWGFVGELHPDKNSENGKHVLYTHKNIVVKYNKDQIIHVNLTQDNPRPLEAGKKMDLTYSVQWIPTNVTFARRFDVYLDYPFFEHQIHWFSIFNSFMMVIFLTGLVSMILMRTLRNDYAKYAREDDDLESLERDVSEESGWKLVHGDVFRPASSLVLLSAVVGTGAQLALLVLLVILMAIVGTLYVGRGAIVTTFIVCYALTSFVSGYVSGGMYSRSGGKHWIKCMVLTASLFPFLCFGIGFLLNTIAIFYGSLAAIPFGTMVVVFVIWGFISFPLALLGTVVGRNWSGAPNNPCRVKTIPRPIPEKKWYLTPSVVSLMGGLLPFGSIFIEMYFVFTSFWNYKVYYVYGFMLLVFVILVIVTVCVTIVGTYFLLNAENYHWQWTSFFSAASTAVYVYLYSIYYYYVKTKMSGFFQTSFYFGYTMMFCLGLGILCGAVGYLGSNLFVRRIYRNIKCD.

Positions 1–24 are cleaved as a signal peptide; the sequence is MPSSSSAAVLVFLLLVSLLTPTFA. The Lumenal segment spans residues 25 to 222; it reads SDSDHKYQAE…YPFFEHQIHW (198 aa). A helical membrane pass occupies residues 223-243; it reads FSIFNSFMMVIFLTGLVSMIL. At 244 to 293 the chain is on the cytoplasmic side; it reads MRTLRNDYAKYAREDDDLESLERDVSEESGWKLVHGDVFRPASSLVLLSA. A helical transmembrane segment spans residues 294-314; that stretch reads VVGTGAQLALLVLLVILMAIV. At 315-321 the chain is on the lumenal side; it reads GTLYVGR. Residues 322–342 form a helical membrane-spanning segment; that stretch reads GAIVTTFIVCYALTSFVSGYV. At 343–364 the chain is on the cytoplasmic side; that stretch reads SGGMYSRSGGKHWIKCMVLTAS. The chain crosses the membrane as a helical span at residues 365–385; that stretch reads LFPFLCFGIGFLLNTIAIFYG. The Lumenal portion of the chain corresponds to 386-395; it reads SLAAIPFGTM. Residues 396 to 416 traverse the membrane as a helical segment; it reads VVVFVIWGFISFPLALLGTVV. Over 417–448 the chain is Cytoplasmic; it reads GRNWSGAPNNPCRVKTIPRPIPEKKWYLTPSV. The chain crosses the membrane as a helical span at residues 449–469; the sequence is VSLMGGLLPFGSIFIEMYFVF. At 470–481 the chain is on the lumenal side; sequence TSFWNYKVYYVY. The helical transmembrane segment at 482 to 502 threads the bilayer; the sequence is GFMLLVFVILVIVTVCVTIVG. Residues 503–518 lie on the Cytoplasmic side of the membrane; that stretch reads TYFLLNAENYHWQWTS. Residues 519-539 form a helical membrane-spanning segment; that stretch reads FFSAASTAVYVYLYSIYYYYV. The Lumenal segment spans residues 540–550; it reads KTKMSGFFQTS. The helical transmembrane segment at 551-571 threads the bilayer; sequence FYFGYTMMFCLGLGILCGAVG. Over 572–589 the chain is Cytoplasmic; the sequence is YLGSNLFVRRIYRNIKCD. Positions 578–583 match the Endoplasmic reticulum export signal motif; the sequence is FVRRIY. The Golgi retention signal signature appears at 587-589; the sequence is KCD.

The protein belongs to the nonaspanin (TM9SF) (TC 9.A.2) family. As to expression, ubiquitous.

Its subcellular location is the endosome membrane. The protein localises to the golgi apparatus membrane. The polypeptide is Transmembrane 9 superfamily member 1 (Arabidopsis thaliana (Mouse-ear cress)).